The following is a 527-amino-acid chain: Catalase (527 aa).

At Ala-2 the chain carries N-acetylalanine. A Phosphoserine modification is found at Ser-9. Residue Lys-13 is modified to N6-succinyllysine. Catalysis depends on residues His-75 and Asn-148. Positions 194, 201, 203, and 213 each coordinate NADP(+). Lys-221 is subject to N6-succinyllysine. The residue at position 233 (Lys-233) is an N6-acetyllysine. Lys-237, Trp-303, His-305, and Lys-306 together coordinate NADP(+). Lys-306 carries the N6-acetyllysine; alternate modification. Lys-306 carries the N6-succinyllysine; alternate modification. Tyr-358 is a heme binding site. Residues Ser-417 and Ser-422 each carry the phosphoserine modification. Lys-480 carries the N6-acetyllysine; alternate modification. An N6-succinyllysine; alternate modification is found at Lys-480. Lys-499 is modified (N6-acetyllysine). Thr-511 is modified (phosphothreonine). Phosphoserine occurs at positions 515 and 517. The Microbody targeting signal; atypical motif lies at 524 to 527 (KANL).

The protein belongs to the catalase family. Homotetramer. Interacts (via microbody targeting signal) with PEX5, monomeric form interacts with PEX5, leading to its translocation into peroxisomes. The cofactor is heme. It depends on NADP(+) as a cofactor.

It localises to the peroxisome matrix. It catalyses the reaction 2 H2O2 = O2 + 2 H2O. Functionally, catalyzes the degradation of hydrogen peroxide (H(2)O(2)) generated by peroxisomal oxidases to water and oxygen, thereby protecting cells from the toxic effects of hydrogen peroxide. Promotes growth of cells including T-cells, B-cells, myeloid leukemia cells, melanoma cells, mastocytoma cells and normal and transformed fibroblast cells. This is Catalase (CAT) from Pongo abelii (Sumatran orangutan).